Consider the following 329-residue polypeptide: Flotillin-like protein FloA (329 aa).

A run of 2 helical transmembrane segments spans residues 4-24 (IAFI…FAIV) and 26-46 (VGLW…TLIG).

This sequence belongs to the flotillin-like FloA family. In terms of assembly, homooligomerizes.

The protein resides in the cell membrane. It is found in the membrane raft. Found in functional membrane microdomains (FMM) that may be equivalent to eukaryotic membrane rafts. FMMs are highly dynamic and increase in number as cells age. Flotillins are thought to be important factors in membrane fluidity. This Acetivibrio thermocellus (strain ATCC 27405 / DSM 1237 / JCM 9322 / NBRC 103400 / NCIMB 10682 / NRRL B-4536 / VPI 7372) (Clostridium thermocellum) protein is Flotillin-like protein FloA.